The primary structure comprises 252 residues: Probable transcriptional regulatory protein Ava_1228 (252 aa).

The protein belongs to the TACO1 family.

The protein resides in the cytoplasm. The chain is Probable transcriptional regulatory protein Ava_1228 from Trichormus variabilis (strain ATCC 29413 / PCC 7937) (Anabaena variabilis).